The following is a 268-amino-acid chain: Tryptophan synthase alpha chain (268 aa).

Residues Glu49 and Asp60 each act as proton acceptor in the active site.

Belongs to the TrpA family. In terms of assembly, tetramer of two alpha and two beta chains.

The enzyme catalyses (1S,2R)-1-C-(indol-3-yl)glycerol 3-phosphate + L-serine = D-glyceraldehyde 3-phosphate + L-tryptophan + H2O. Its pathway is amino-acid biosynthesis; L-tryptophan biosynthesis; L-tryptophan from chorismate: step 5/5. In terms of biological role, the alpha subunit is responsible for the aldol cleavage of indoleglycerol phosphate to indole and glyceraldehyde 3-phosphate. This Escherichia coli O127:H6 (strain E2348/69 / EPEC) protein is Tryptophan synthase alpha chain.